A 122-amino-acid polypeptide reads, in one-letter code: Large ribosomal subunit protein uL14 (122 aa).

This sequence belongs to the universal ribosomal protein uL14 family. Part of the 50S ribosomal subunit. Forms a cluster with proteins L3 and L19. In the 70S ribosome, L14 and L19 interact and together make contacts with the 16S rRNA in bridges B5 and B8.

Functionally, binds to 23S rRNA. Forms part of two intersubunit bridges in the 70S ribosome. This chain is Large ribosomal subunit protein uL14, found in Mycobacterium sp. (strain KMS).